Here is a 2339-residue protein sequence, read N- to C-terminus: Voltage-dependent N-type calcium channel subunit alpha-1B (2339 aa).

The Cytoplasmic segment spans residues 1–90; the sequence is MVRFGDELGG…DNVVRKYAKR (90 aa). Over residues 15–34 the composition is skewed to gly residues; sequence AGGAERARGGGAGGAGGPGP. A disordered region spans residues 15 to 37; it reads AGGAERARGGGAGGAGGPGPGGL. Position 22 is an omega-N-methylarginine (arginine 22). The I repeat unit spans residues 82 to 359; it reads NVVRKYAKRI…LVLGVLSGEF (278 aa). Residues 91 to 114 form a helical membrane-spanning segment; that stretch reads ITEWPPFEYMILATIIANCIVLAL. Over 115 to 131 the chain is Extracellular; the sequence is EQHLPDGDKTPMSERLD. Residues 132–152 form a helical membrane-spanning segment; sequence DTEPYFIGIFCFEAGIKILAL. Residues 153 to 163 lie on the Cytoplasmic side of the membrane; it reads GFVLHKGSYLR. The helical transmembrane segment at 164-182 threads the bilayer; sequence NGWNVMDFVVVLTGILATA. The Extracellular segment spans residues 183–187; the sequence is GTDFD. A helical transmembrane segment spans residues 188-211; the sequence is LRTLRAVRVLRPLKLVSGIPSLQV. Over 212 to 221 the chain is Cytoplasmic; the sequence is VLKSIMKAMV. The chain crosses the membrane as a helical span at residues 222–244; sequence PLLQIGLLLFFAILMFAIIGLEF. The Extracellular segment spans residues 245–331; the sequence is YMGKFHKACF…NTNDAAGNTW (87 aa). Residue asparagine 256 is glycosylated (N-linked (GlcNAc...) asparagine). Residues 332–356 traverse the membrane as a helical segment; that stretch reads NWLYFIPLIIIGSFFMLNLVLGVLS. Topologically, residues 357-483 are cytoplasmic; sequence GEFAKERERV…FFIRRMVKAQ (127 aa). A binding to the beta subunit region spans residues 379 to 396; it reads QQIERELNGYLEWIFKAE. The residue at position 411 (serine 411) is a Phosphoserine. 452–459 is an ATP binding site; that stretch reads ASLKSGKT. The II repeat unit spans residues 469 to 713; sequence EKMFRFFIRR…VFLAIAVDNL (245 aa). The helical transmembrane segment at 484–502 threads the bilayer; it reads SFYWTVLCVVALNTLCVAM. Residues 503 to 512 lie on the Extracellular side of the membrane; it reads VHYNQPQRLT. The chain crosses the membrane as a helical span at residues 513–535; it reads TALYFAEFVFLGLFLTEMSLKMY. Residues 536-545 are Cytoplasmic-facing; it reads GLGPRSYFRS. Serine 545 is an a 1,2-diacyl-sn-glycero-3-phospho-(1D-myo-inositol-4,5-bisphosphate) binding site. The helical transmembrane segment at 546-567 threads the bilayer; sequence SFNCFDFGVIVGSIFEVVWAAV. The Extracellular segment spans residues 568–574; sequence KPGTSFG. The chain crosses the membrane as a helical span at residues 575–587; sequence ISVLRALRLLRIF. A 1,2-diacyl-sn-glycero-3-phospho-(1D-myo-inositol-4,5-bisphosphate) is bound by residues arginine 585 and lysine 588. The Cytoplasmic portion of the chain corresponds to 588–605; it reads KVTKYWNSLRNLVVSLLN. A helical transmembrane segment spans residues 606–631; sequence SMKSIISLLFLLFLFIVVFALLGMQL. Residues 632–683 are Extracellular-facing; that stretch reads FGGQFNFKDETPTTNFDTFPAAILTVFQILTGEDWNAVMYHGIESQGGVSRG. The chain crosses the membrane as a helical span at residues 684 to 710; the sequence is MFSSFYFIVLTLFGNYTLLNVFLAIAV. At 711 to 1156 the chain is on the cytoplasmic side; that stretch reads DNLANAQELT…CCHYIVTMRY (446 aa). Phosphoserine is present on residues serine 746, serine 749, and serine 784. Composition is skewed to basic and acidic residues over residues 809 to 827, 870 to 891, 927 to 937, 973 to 984, and 999 to 1026; these read DVKT…RDAP, EQDR…EERG, GSPEEAAEREP, CPREAESSEEPA, and TAEK…RNHQ. Disordered stretches follow at residues 809-1026 and 1056-1084; these read DVKT…RNHQ and VEEQ…TTVH. Positions 1066–1083 are enriched in polar residues; the sequence is QRNVTRMGSQPPDTSTTV. A Phosphoserine modification is found at serine 1074. An III repeat occupies 1142–1424; it reads NLLRRCCHYI…IFVALIIITF (283 aa). The helical transmembrane segment at 1157–1175 threads the bilayer; the sequence is FEMVILVVIALSSIALAAE. Residues 1176–1183 are Extracellular-facing; the sequence is DPVRTDSP. Residues 1184 to 1208 form a helical membrane-spanning segment; it reads RNNALKYMDYIFTGVFTFEMVIKMI. The Cytoplasmic portion of the chain corresponds to 1209–1222; that stretch reads DLGLLLHPGAYFRD. The helical transmembrane segment at 1223-1243 threads the bilayer; sequence LWNILDFIVVSGALVAFAFSG. Over 1244 to 1249 the chain is Extracellular; sequence SKGKDI. Residues 1250–1270 traverse the membrane as a helical segment; the sequence is STIKSLRVLRVLRPLKTIKRL. Residues 1271–1288 lie on the Cytoplasmic side of the membrane; that stretch reads PKLKAVFDCVVNSLKNVL. A helical membrane pass occupies residues 1289-1308; sequence NILIVYMLFMFIFAVIAVQL. Residues 1309-1395 are Extracellular-facing; that stretch reads FKGKFFYCTD…EQGPSPGYRM (87 aa). The chain crosses the membrane as a helical span at residues 1396–1421; the sequence is ELSIFYVVYFVVFPFFFVNIFVALII. The Cytoplasmic segment spans residues 1422–1476; that stretch reads ITFQEQGDKVMSECSLEKNERACIDFAISARPLTRYMPQNKQSFQYKTWTFVVSP. An IV repeat occupies 1461-1714; it reads NKQSFQYKTW…LFVAVIMDNF (254 aa). Residues 1477–1495 traverse the membrane as a helical segment; it reads PFEYFIMAMIALNTVVLMM. The Extracellular portion of the chain corresponds to 1496 to 1503; that stretch reads KFYDAPYE. A helical membrane pass occupies residues 1504-1528; sequence YELMLKCLNIVFTSMFSMECVLKII. At 1529-1538 the chain is on the cytoplasmic side; it reads AFGVLNYFRD. Residues 1539-1560 form a helical membrane-spanning segment; the sequence is AWNVFDFVTVLGSITDILVTEI. At 1561–1566 the chain is on the extracellular side; that stretch reads ANNFIN. Asparagine 1566 is a glycosylation site (N-linked (GlcNAc...) asparagine). A helical transmembrane segment spans residues 1567–1585; that stretch reads LSFLRLFRAARLIKLLRQG. Residues 1586–1604 are Cytoplasmic-facing; that stretch reads YTIRILLWTFVQSFKALPY. Residues 1605-1624 traverse the membrane as a helical segment; it reads VCLLIAMLFFIYAIIGMQVF. The Extracellular segment spans residues 1625-1686; sequence GNIALDDDTS…SNASECGSDF (62 aa). A glycan (N-linked (GlcNAc...) asparagine) is linked at asparagine 1678. Residues 1687–1710 traverse the membrane as a helical segment; it reads AYFYFVSFIFLCSFLMLNLFVAVI. Over 1711–2339 the chain is Cytoplasmic; it reads MDNFEYLTRD…CHHPDRDRRC (629 aa). The region spanning 1727–1762 is the EF-hand domain; that stretch reads HHLDEFIRVWAEYDPAACGRISYSDMFEMLKHMSPP. 3 residues coordinate Ca(2+): aspartate 1740, arginine 1746, and aspartate 1751. The tract at residues 1983-2312 is disordered; the sequence is TLSGPDAEPQ…QPPPLRRVPN (330 aa). Over residues 2050–2064 the composition is skewed to basic residues; sequence PHHHHHRCHRRRDRK. The residue at position 2067 (serine 2067) is a Phosphoserine. Residues 2099 to 2136 are compositionally biased toward basic and acidic residues; it reads CRRERERRQERGRSQERRQPSSSSSEKHRFYSCDRFGG. 2 stretches are compositionally biased toward polar residues: residues 2144–2155 and 2165–2181; these read PSLSSHPTSPTA and GSGS…SGAS. Serine 2224, serine 2233, and serine 2256 each carry phosphoserine. The segment covering 2286–2302 has biased composition (low complexity); sequence SNSGRSSRTSYVSSLTS.

The protein belongs to the calcium channel alpha-1 subunit (TC 1.A.1.11) family. CACNA1B subfamily. As to quaternary structure, multisubunit complex consisting of alpha-1, alpha-2, beta and delta subunits in a 1:1:1:1 ratio. The channel activity is directed by the pore-forming and voltage-sensitive alpha-1 subunit. In many cases, this subunit is sufficient to generate voltage-sensitive calcium channel activity. The auxiliary subunits beta and alpha-2/delta linked by a disulfide bridge regulate the channel activity. Interacts with RIMS1. Interacts with FMR1 (via C-terminus); this interaction induces a decrease in the number of presynaptic functional CACNA1B channels at the cell surface. Phosphorylated in vitro by CaM-kinase II, PKA, PKC and CGPK. Widespread expression throughout the brain. Highest levels in corpus striatum and midbrain.

It is found in the membrane. The enzyme catalyses Ca(2+)(in) = Ca(2+)(out). With respect to regulation, is specifically blocked by omega-conotoxin GVIA. Is specifically blocked by omega-conotoxin MVIIA (ziconotide). Is insensitive to dihydropyridines (DHP). In terms of biological role, voltage-sensitive calcium channels (VSCC) mediate the entry of calcium ions into excitable cells and are also involved in a variety of calcium-dependent processes, including muscle contraction, hormone or neurotransmitter release, gene expression, cell motility, cell division and cell death. This alpha-1B subunit gives rise to N-type calcium currents. N-type calcium channels belong to the 'high-voltage activated' (HVA) group. They are involved in pain signaling. Calcium channels containing alpha-1B subunit may play a role in directed migration of immature neurons. Mediates Ca(2+) release probability at hippocampal neuronal soma and synaptic terminals. The polypeptide is Voltage-dependent N-type calcium channel subunit alpha-1B (CACNA1B) (Oryctolagus cuniculus (Rabbit)).